A 206-amino-acid polypeptide reads, in one-letter code: Ras-related protein O-RAL (206 aa).

21–28 (GSGGVGKS) is a binding site for GTP. The Effector region motif lies at 43-51 (YEPTKADSY). GTP is bound by residues 68–72 (DTAGQ) and 128–131 (NKSD). Over residues 180–189 (KMSENKDKNG) the composition is skewed to basic and acidic residues. The interval 180 to 206 (KMSENKDKNGKKSSRNKKSLRERCCIL) is disordered. Cysteine 203 bears the Cysteine methyl ester mark. Cysteine 203 carries the S-geranylgeranyl cysteine lipid modification. Positions 204–206 (CIL) are cleaved as a propeptide — removed in mature form.

The protein belongs to the small GTPase superfamily. Ras family.

The protein resides in the cell membrane. It catalyses the reaction GTP + H2O = GDP + phosphate + H(+). This chain is Ras-related protein O-RAL, found in Diplobatis ommata (Ocellated electric ray).